The following is a 429-amino-acid chain: Serine hydroxymethyltransferase (429 aa).

Residues leucine 130 and glycine 134–leucine 136 contribute to the (6S)-5,6,7,8-tetrahydrofolate site. Lysine 239 bears the N6-(pyridoxal phosphate)lysine mark.

Belongs to the SHMT family. As to quaternary structure, homodimer. Requires pyridoxal 5'-phosphate as cofactor.

It localises to the cytoplasm. It carries out the reaction (6R)-5,10-methylene-5,6,7,8-tetrahydrofolate + glycine + H2O = (6S)-5,6,7,8-tetrahydrofolate + L-serine. It functions in the pathway one-carbon metabolism; tetrahydrofolate interconversion. It participates in amino-acid biosynthesis; glycine biosynthesis; glycine from L-serine: step 1/1. Catalyzes the reversible interconversion of serine and glycine with tetrahydrofolate (THF) serving as the one-carbon carrier. This reaction serves as the major source of one-carbon groups required for the biosynthesis of purines, thymidylate, methionine, and other important biomolecules. Also exhibits THF-independent aldolase activity toward beta-hydroxyamino acids, producing glycine and aldehydes, via a retro-aldol mechanism. The protein is Serine hydroxymethyltransferase of Phenylobacterium zucineum (strain HLK1).